The sequence spans 286 residues: Polyamine aminopropyltransferase (286 aa).

A PABS domain is found at 5-238 (TMWHETLHDQ…GIMTFAWATD (234 aa)). Gln-33 serves as a coordination point for S-methyl-5'-thioadenosine. His-64 and Asp-88 together coordinate spermidine. Residues Glu-108 and 140–141 (DG) contribute to the S-methyl-5'-thioadenosine site. Asp-158 acts as the Proton acceptor in catalysis. A spermidine-binding site is contributed by 158–161 (DCTD). An S-methyl-5'-thioadenosine-binding site is contributed by Pro-165.

Belongs to the spermidine/spermine synthase family. As to quaternary structure, homodimer or homotetramer.

It is found in the cytoplasm. The enzyme catalyses S-adenosyl 3-(methylsulfanyl)propylamine + putrescine = S-methyl-5'-thioadenosine + spermidine + H(+). It functions in the pathway amine and polyamine biosynthesis; spermidine biosynthesis; spermidine from putrescine: step 1/1. Catalyzes the irreversible transfer of a propylamine group from the amino donor S-adenosylmethioninamine (decarboxy-AdoMet) to putrescine (1,4-diaminobutane) to yield spermidine. This is Polyamine aminopropyltransferase from Salmonella schwarzengrund (strain CVM19633).